Here is a 59-residue protein sequence, read N- to C-terminus: uncharacterized protein (59 aa).

This is an uncharacterized protein from Saccharomyces cerevisiae (strain ATCC 204508 / S288c) (Baker's yeast).